We begin with the raw amino-acid sequence, 444 residues long: Glycogen synthase (444 aa).

Arginine 15 provides a ligand contact to ADP-alpha-D-glucose.

It belongs to the glycosyltransferase 1 family. Bacterial/plant glycogen synthase subfamily.

The enzyme catalyses [(1-&gt;4)-alpha-D-glucosyl](n) + ADP-alpha-D-glucose = [(1-&gt;4)-alpha-D-glucosyl](n+1) + ADP + H(+). It functions in the pathway glycan biosynthesis; glycogen biosynthesis. In terms of biological role, synthesizes alpha-1,4-glucan chains using ADP-glucose. The sequence is that of Glycogen synthase from Deinococcus radiodurans (strain ATCC 13939 / DSM 20539 / JCM 16871 / CCUG 27074 / LMG 4051 / NBRC 15346 / NCIMB 9279 / VKM B-1422 / R1).